Here is a 225-residue protein sequence, read N- to C-terminus: 3-dehydroquinate dehydratase (225 aa).

3-dehydroquinate-binding positions include 30–32 (EWR) and R62. Residue H118 is the Proton donor/acceptor of the active site. Catalysis depends on K143, which acts as the Schiff-base intermediate with substrate. R186 and Q209 together coordinate 3-dehydroquinate.

The protein belongs to the type-I 3-dehydroquinase family. In terms of assembly, homodimer.

It catalyses the reaction 3-dehydroquinate = 3-dehydroshikimate + H2O. It participates in metabolic intermediate biosynthesis; chorismate biosynthesis; chorismate from D-erythrose 4-phosphate and phosphoenolpyruvate: step 3/7. Involved in the third step of the chorismate pathway, which leads to the biosynthesis of aromatic amino acids. Catalyzes the cis-dehydration of 3-dehydroquinate (DHQ) and introduces the first double bond of the aromatic ring to yield 3-dehydroshikimate. The sequence is that of 3-dehydroquinate dehydratase from Streptococcus agalactiae serotype Ia (strain ATCC 27591 / A909 / CDC SS700).